Reading from the N-terminus, the 100-residue chain is Integration host factor subunit beta (100 aa).

This sequence belongs to the bacterial histone-like protein family. Heterodimer of an alpha and a beta chain.

This protein is one of the two subunits of integration host factor, a specific DNA-binding protein that functions in genetic recombination as well as in transcriptional and translational control. The sequence is that of Integration host factor subunit beta from Agrobacterium fabrum (strain C58 / ATCC 33970) (Agrobacterium tumefaciens (strain C58)).